Consider the following 861-residue polypeptide: Integrator complex subunit 6-like (861 aa).

A VWFA domain is found at 3-227 (ILLFLIDTSA…QCLESLVQKV (225 aa)). Positions 605–626 (PQNKVKRPGEPNSPMSSKRRRS) are disordered. Position 617 is a phosphoserine (Ser617).

The polypeptide is Integrator complex subunit 6-like (INTS6L) (Homo sapiens (Human)).